Consider the following 316-residue polypeptide: MAMYQNMLVVIDPNQDDQPALRRAVYLHQRIGGKIKAFLPIYDFSYEMTTLLSPDERTAMRQGVISQRTAWIHEQAKYYLNAGVPIEIKVVWHNRPFEAIIQEVISGGHDLVLKMAHQHDRLEAVIFTPTDWHLLRKCPSPVWMVKDQPWPEGGKALVAVNLASEEPYHNALNEKLVKETIELAEQVNHTEVHLVGAYPVTPINIAIELPEFDPSVYNDAIRGQHLLAMKALRQKFGINENMTHVEKGLPEEVIPDLAEHLQAGIVVLGTVGRTGISAAFLGNTAEQVIDHLRCDLLVIKPDQYQTPVELDDEEDD.

This sequence belongs to the universal stress protein A family.

Its subcellular location is the cytoplasm. Its function is as follows. Required for resistance to DNA-damaging agents. This chain is Universal stress protein E (uspE), found in Escherichia coli O157:H7.